The following is a 542-amino-acid chain: Membrane protein insertase YidC (542 aa).

A helical membrane pass occupies residues 5-25; that stretch reads TLLAVILSITVFYVFSLLFAP. The interval 33-64 is disordered; the sequence is ESTGQAVSAPVSAGQPVAGGVQPSASAPSLPA. A compositionally biased stretch (low complexity) spans 54–64; sequence QPSASAPSLPA. 5 helical membrane passes run 323–343, 345–365, 419–439, 463–483, and 500–520; these read LDLG…KYFY, YVGN…ALFF, LPML…MFSI, MLGL…TMFI, and MLAL…GLVL.

This sequence belongs to the OXA1/ALB3/YidC family. Type 1 subfamily. In terms of assembly, interacts with the Sec translocase complex via SecD. Specifically interacts with transmembrane segments of nascent integral membrane proteins during membrane integration.

It localises to the cell inner membrane. In terms of biological role, required for the insertion and/or proper folding and/or complex formation of integral membrane proteins into the membrane. Involved in integration of membrane proteins that insert both dependently and independently of the Sec translocase complex, as well as at least some lipoproteins. Aids folding of multispanning membrane proteins. This chain is Membrane protein insertase YidC, found in Pelobacter propionicus (strain DSM 2379 / NBRC 103807 / OttBd1).